Reading from the N-terminus, the 1324-residue chain is Probable phosphoribosylformylglycinamidine synthase (1324 aa).

ATP-binding positions include 314–325 (GATTGTGGRIRD), 394–396 (SGF), and A681. D682, E721, N725, and D894 together coordinate Mg(2+). S896 contacts ATP. The 243-residue stretch at 1053–1295 (RVAIIREEGS…LTWQWAESSE (243 aa)) folds into the Glutamine amidotransferase type-1 domain. Residue C1146 is the Nucleophile of the active site. Catalysis depends on residues H1280 and D1282.

It in the N-terminal section; belongs to the FGAMS family.

It localises to the cytoplasm. It catalyses the reaction N(2)-formyl-N(1)-(5-phospho-beta-D-ribosyl)glycinamide + L-glutamine + ATP + H2O = 2-formamido-N(1)-(5-O-phospho-beta-D-ribosyl)acetamidine + L-glutamate + ADP + phosphate + H(+). The protein operates within purine metabolism; IMP biosynthesis via de novo pathway; 5-amino-1-(5-phospho-D-ribosyl)imidazole from N(2)-formyl-N(1)-(5-phospho-D-ribosyl)glycinamide: step 1/2. Its function is as follows. Phosphoribosylformylglycinamidine synthase involved in the purines biosynthetic pathway. Catalyzes the ATP-dependent conversion of formylglycinamide ribonucleotide (FGAR) and glutamine to yield formylglycinamidine ribonucleotide (FGAM) and glutamate. The protein is Probable phosphoribosylformylglycinamidine synthase of Caenorhabditis elegans.